The chain runs to 103 residues: Nucleoid-associated protein Cgl0243/cg0297 (103 aa).

It belongs to the YbaB/EbfC family. In terms of assembly, homodimer.

Its subcellular location is the cytoplasm. It is found in the nucleoid. In terms of biological role, binds to DNA and alters its conformation. May be involved in regulation of gene expression, nucleoid organization and DNA protection. This is Nucleoid-associated protein Cgl0243/cg0297 from Corynebacterium glutamicum (strain ATCC 13032 / DSM 20300 / JCM 1318 / BCRC 11384 / CCUG 27702 / LMG 3730 / NBRC 12168 / NCIMB 10025 / NRRL B-2784 / 534).